The chain runs to 376 residues: Serpin B9 (376 aa).

Methionine 1 is modified (N-acetylmethionine).

Belongs to the serpin family. Ov-serpin subfamily.

The protein localises to the cytoplasm. Its function is as follows. Granzyme B inhibitor. The protein is Serpin B9 (SERPINB9) of Homo sapiens (Human).